The chain runs to 463 residues: ATP-dependent rRNA helicase SPB4 (463 aa).

The Q motif signature appears at 4–32 (KGIEDVAMNGRLKKEIEENGFGKMTEVQL). The region spanning 35-205 (IPEVLKGKDV…RVFLRNPVSI (171 aa)) is the Helicase ATP-binding domain. 48–55 (SPTGTGKT) contacts ATP. A DEAD box motif is present at residues 153–156 (DEAD). Positions 226–382 (KLLVLMDIVT…DIKSMISPEL (157 aa)) constitute a Helicase C-terminal domain. The interval 444-463 (RDGKKRALPKKKYRKKRAIK) is disordered. A compositionally biased stretch (basic residues) spans 446 to 463 (GKKRALPKKKYRKKRAIK).

The protein belongs to the DEAD box helicase family. DDX55/SPB4 subfamily. As to quaternary structure, component of pre-60S ribosomal complexes.

Its subcellular location is the nucleus. The protein resides in the nucleolus. It carries out the reaction ATP + H2O = ADP + phosphate + H(+). In terms of biological role, ATP-binding RNA helicase involved in the biogenesis of 60S ribosomal subunits. Binds 90S pre-ribosomal particles and dissociates from pre-60S ribosomal particles after processing of 27SB pre-rRNA. Required for the normal formation of 18S rRNA through the processing of pre-rRNAs at sites A0, A1 and A2, and the normal formation of 25S and 5.8S rRNAs through the processing of pre-rRNAs at sites C1 and C2. The protein is ATP-dependent rRNA helicase SPB4 of Encephalitozoon cuniculi (strain GB-M1) (Microsporidian parasite).